The following is a 119-amino-acid chain: uncharacterized protein (119 aa).

The helical transmembrane segment at 80 to 104 (VFPLVYLFCVVFQFLSLGCYLSIFF) threads the bilayer.

The protein localises to the membrane. This is an uncharacterized protein from Saccharomyces cerevisiae (strain ATCC 204508 / S288c) (Baker's yeast).